A 69-amino-acid polypeptide reads, in one-letter code: Conotoxin Cal12.1p4 (69 aa).

Positions 1-23 (DLITNSYTRGKPRHVTSWRNLKT) are excised as a propeptide.

Post-translationally, contains 4 disulfide bonds. As to expression, expressed by the venom duct.

It is found in the secreted. In Californiconus californicus (California cone), this protein is Conotoxin Cal12.1p4.